A 299-amino-acid polypeptide reads, in one-letter code: tRNA dimethylallyltransferase (299 aa).

11–18 (GPTGSGKS) contributes to the ATP binding site. Position 13–18 (13–18 (TGSGKS)) interacts with substrate.

It belongs to the IPP transferase family. As to quaternary structure, monomer. Requires Mg(2+) as cofactor.

The enzyme catalyses adenosine(37) in tRNA + dimethylallyl diphosphate = N(6)-dimethylallyladenosine(37) in tRNA + diphosphate. Its function is as follows. Catalyzes the transfer of a dimethylallyl group onto the adenine at position 37 in tRNAs that read codons beginning with uridine, leading to the formation of N6-(dimethylallyl)adenosine (i(6)A). The protein is tRNA dimethylallyltransferase of Pseudarthrobacter chlorophenolicus (strain ATCC 700700 / DSM 12829 / CIP 107037 / JCM 12360 / KCTC 9906 / NCIMB 13794 / A6) (Arthrobacter chlorophenolicus).